The primary structure comprises 158 residues: Small ribosomal subunit protein uS19 (158 aa).

It belongs to the universal ribosomal protein uS19 family.

Functionally, protein S19 forms a complex with S13 that binds strongly to the 16S ribosomal RNA. This chain is Small ribosomal subunit protein uS19, found in Pyrobaculum calidifontis (strain DSM 21063 / JCM 11548 / VA1).